The primary structure comprises 251 residues: uncharacterized protein (251 aa).

Positions 1 to 18 are cleaved as a signal peptide; the sequence is MRILIILSIILCSLSIRA.

The protein belongs to the MlaA family.

This is an uncharacterized protein from Rickettsia conorii (strain ATCC VR-613 / Malish 7).